We begin with the raw amino-acid sequence, 325 residues long: Phosphatidylglycerol--prolipoprotein diacylglyceryl transferase (325 aa).

4 consecutive transmembrane segments (helical) span residues 19 to 39 (IPLR…VWFG), 47 to 67 (GGKA…GLVG), 93 to 113 (IWEG…GAWI), and 119 to 139 (GIPL…AQAI). Arg-141 is an a 1,2-diacyl-sn-glycero-3-phospho-(1'-sn-glycerol) binding site. 3 helical membrane passes run 175–195 (HPTF…VIWA), 207–225 (FALY…EYMR), and 237–257 (LNVW…VISA). Basic and acidic residues predominate over residues 266-312 (IVEPDRDATPAEKDGSGEDGSGEKGVAKADAAAKDPLTKDEPGKDAT). Positions 266–325 (IVEPDRDATPAEKDGSGEDGSGEKGVAKADAAAKDPLTKDEPGKDATAENAGAAGAAEKA) are disordered. The span at 313–325 (AENAGAAGAAEKA) shows a compositional bias: low complexity.

This sequence belongs to the Lgt family.

The protein resides in the cell membrane. The catalysed reaction is L-cysteinyl-[prolipoprotein] + a 1,2-diacyl-sn-glycero-3-phospho-(1'-sn-glycerol) = an S-1,2-diacyl-sn-glyceryl-L-cysteinyl-[prolipoprotein] + sn-glycerol 1-phosphate + H(+). It participates in protein modification; lipoprotein biosynthesis (diacylglyceryl transfer). Catalyzes the transfer of the diacylglyceryl group from phosphatidylglycerol to the sulfhydryl group of the N-terminal cysteine of a prolipoprotein, the first step in the formation of mature lipoproteins. The polypeptide is Phosphatidylglycerol--prolipoprotein diacylglyceryl transferase (Streptomyces griseus subsp. griseus (strain JCM 4626 / CBS 651.72 / NBRC 13350 / KCC S-0626 / ISP 5235)).